The sequence spans 378 residues: Succinyl-diaminopimelate desuccinylase (378 aa).

Zn(2+) is bound at residue His66. The active site involves Asp68. Asp99 is a binding site for Zn(2+). The active-site Proton acceptor is the Glu133. 3 residues coordinate Zn(2+): Glu134, Glu162, and His348.

This sequence belongs to the peptidase M20A family. DapE subfamily. In terms of assembly, homodimer. The cofactor is Zn(2+). Co(2+) serves as cofactor.

The catalysed reaction is N-succinyl-(2S,6S)-2,6-diaminopimelate + H2O = (2S,6S)-2,6-diaminopimelate + succinate. The protein operates within amino-acid biosynthesis; L-lysine biosynthesis via DAP pathway; LL-2,6-diaminopimelate from (S)-tetrahydrodipicolinate (succinylase route): step 3/3. Catalyzes the hydrolysis of N-succinyl-L,L-diaminopimelic acid (SDAP), forming succinate and LL-2,6-diaminopimelate (DAP), an intermediate involved in the bacterial biosynthesis of lysine and meso-diaminopimelic acid, an essential component of bacterial cell walls. This Halorhodospira halophila (strain DSM 244 / SL1) (Ectothiorhodospira halophila (strain DSM 244 / SL1)) protein is Succinyl-diaminopimelate desuccinylase.